The chain runs to 888 residues: Alanine--tRNA ligase (888 aa).

4 residues coordinate Zn(2+): His564, His568, Cys676, and His680.

The protein belongs to the class-II aminoacyl-tRNA synthetase family. Zn(2+) is required as a cofactor.

It is found in the cytoplasm. It catalyses the reaction tRNA(Ala) + L-alanine + ATP = L-alanyl-tRNA(Ala) + AMP + diphosphate. In terms of biological role, catalyzes the attachment of alanine to tRNA(Ala) in a two-step reaction: alanine is first activated by ATP to form Ala-AMP and then transferred to the acceptor end of tRNA(Ala). Also edits incorrectly charged Ser-tRNA(Ala) and Gly-tRNA(Ala) via its editing domain. This chain is Alanine--tRNA ligase, found in Mesorhizobium japonicum (strain LMG 29417 / CECT 9101 / MAFF 303099) (Mesorhizobium loti (strain MAFF 303099)).